The primary structure comprises 203 residues: Ribonuclease T (203 aa).

In terms of domain architecture, Exonuclease spans 11 to 185 (VVVDVETGGF…YDTEKTAELF (175 aa)). Positions 14, 16, 172, and 177 each coordinate Mg(2+). Catalysis depends on histidine 172, which acts as the Proton donor/acceptor.

The protein belongs to the RNase T family. Homodimer. Mg(2+) is required as a cofactor.

Trims short 3' overhangs of a variety of RNA species, leaving a one or two nucleotide 3' overhang. Responsible for the end-turnover of tRNA: specifically removes the terminal AMP residue from uncharged tRNA (tRNA-C-C-A). Also appears to be involved in tRNA biosynthesis. This chain is Ribonuclease T, found in Pseudomonas putida (strain ATCC 47054 / DSM 6125 / CFBP 8728 / NCIMB 11950 / KT2440).